Consider the following 525-residue polypeptide: GMP synthase [glutamine-hydrolyzing] (525 aa).

In terms of domain architecture, Glutamine amidotransferase type-1 spans 9-207 (RILILDFGSQ…VRDICQCEAL (199 aa)). Cys-86 (nucleophile) is an active-site residue. Active-site residues include His-181 and Glu-183. The GMPS ATP-PPase domain occupies 208 to 400 (WTPAKIIDDA…LGLPYDMLYR (193 aa)). 235–241 (SGGVDSS) contributes to the ATP binding site.

Homodimer.

The catalysed reaction is XMP + L-glutamine + ATP + H2O = GMP + L-glutamate + AMP + diphosphate + 2 H(+). It functions in the pathway purine metabolism; GMP biosynthesis; GMP from XMP (L-Gln route): step 1/1. Catalyzes the synthesis of GMP from XMP. The sequence is that of GMP synthase [glutamine-hydrolyzing] from Salmonella schwarzengrund (strain CVM19633).